The chain runs to 357 residues: Aurora kinase A- and ninein-interacting protein (357 aa).

The segment covering L71–Q91 has biased composition (polar residues). The disordered stretch occupies residues L71–K98. The interaction with AURKA stretch occupies residues R187–F357. Phosphoserine is present on residues S267 and S292. The interval K281 to F357 is interaction with RBBP8/CtIP.

This sequence belongs to the AUNIP family. Interacts (via C-terminus) with AURKA (via C-terminus). Interacts (via N-terminus) with NIN; this interaction blocks NIN phosphorylation by both AURKA and GSK3B. Identified in a complex with NIN and AURKA. Interacts with RBBP8/CtIP. Expressed in heart, skeletal muscles, placenta and testis.

It is found in the nucleus. The protein resides in the chromosome. The protein localises to the cytoplasm. It localises to the cytoskeleton. Its subcellular location is the microtubule organizing center. It is found in the centrosome. The protein resides in the spindle pole. Its function is as follows. DNA-binding protein that accumulates at DNA double-strand breaks (DSBs) following DNA damage and promotes DNA resection and homologous recombination. Serves as a sensor of DNA damage: binds DNA with a strong preference for DNA substrates that mimic structures generated at stalled replication forks, and anchors RBBP8/CtIP to DSB sites to promote DNA end resection and ensuing homologous recombination repair. Inhibits non-homologous end joining (NHEJ). Required for the dynamic movement of AURKA at the centrosomes and spindle apparatus during the cell cycle. This Homo sapiens (Human) protein is Aurora kinase A- and ninein-interacting protein.